Here is a 197-residue protein sequence, read N- to C-terminus: Guanylate kinase (197 aa).

A Guanylate kinase-like domain is found at 10 to 187 (GSLFIVSAPA…AYQVLRSILI (178 aa)). 17 to 24 (APAGTGKT) serves as a coordination point for ATP.

Belongs to the guanylate kinase family.

Its subcellular location is the cytoplasm. The enzyme catalyses GMP + ATP = GDP + ADP. Functionally, essential for recycling GMP and indirectly, cGMP. This is Guanylate kinase from Protochlamydia amoebophila (strain UWE25).